Here is a 306-residue protein sequence, read N- to C-terminus: uncharacterized protein (306 aa).

A run of 9 helical transmembrane segments spans residues 13–33, 53–73, 86–106, 112–132, 147–167, 177–197, 214–234, 246–268, and 272–294; these read VLLSQFLNGYEWAVPWIFAFI, PLPMILALFVLHIFMPLFAWG, ITGLTLAVVIPTGITSLIWAA, VGLTLSIILVDTVLSPLIVPL, WGMMKGLIVMVVIPSFLGMLF, AFVSSALSPFSKLCLMAVIAI, AGIAVTVFFIALTGYAAAWLI, VSLIFTGGMRNISAGAVLAVTFF, and VAVPVVIGMLFQQILAALFGYML.

The protein localises to the cell membrane. This is an uncharacterized protein from Bacillus subtilis (strain 168).